Consider the following 300-residue polypeptide: Protein N-terminal and lysine N-methyltransferase EFM7 (300 aa).

Residues Trp-75, 101-103 (GAG), Asp-123, Trp-156, and Ser-179 contribute to the S-adenosyl-L-methionine site.

Belongs to the class I-like SAM-binding methyltransferase superfamily. EFM7 family.

The protein localises to the cytoplasm. In terms of biological role, S-adenosyl-L-methionine-dependent protein methyltransferase that trimethylates the N-terminal glycine 'Gly-2' of elongation factor 1-alpha, before also catalyzing the mono- and dimethylation of 'Lys-3'. The protein is Protein N-terminal and lysine N-methyltransferase EFM7 of Cryptococcus neoformans var. neoformans serotype D (strain JEC21 / ATCC MYA-565) (Filobasidiella neoformans).